A 285-amino-acid chain; its full sequence is Bifunctional protein FolD (285 aa).

NADP(+) contacts are provided by residues 166-168 (GAS), Ser-191, and Ile-232.

It belongs to the tetrahydrofolate dehydrogenase/cyclohydrolase family. Homodimer.

The enzyme catalyses (6R)-5,10-methylene-5,6,7,8-tetrahydrofolate + NADP(+) = (6R)-5,10-methenyltetrahydrofolate + NADPH. It carries out the reaction (6R)-5,10-methenyltetrahydrofolate + H2O = (6R)-10-formyltetrahydrofolate + H(+). Its pathway is one-carbon metabolism; tetrahydrofolate interconversion. In terms of biological role, catalyzes the oxidation of 5,10-methylenetetrahydrofolate to 5,10-methenyltetrahydrofolate and then the hydrolysis of 5,10-methenyltetrahydrofolate to 10-formyltetrahydrofolate. The sequence is that of Bifunctional protein FolD from Actinobacillus pleuropneumoniae serotype 7 (strain AP76).